The chain runs to 325 residues: GTP 3',8-cyclase (325 aa).

Positions 4-219 (TYQREINYLR…DAISAKLGPL (216 aa)) constitute a Radical SAM core domain. Position 13 (R13) interacts with GTP. [4Fe-4S] cluster is bound by residues C20 and C24. Y26 is an S-adenosyl-L-methionine binding site. C27 provides a ligand contact to [4Fe-4S] cluster. Residue R63 participates in GTP binding. Residue G67 coordinates S-adenosyl-L-methionine. T94 is a binding site for GTP. S118 lines the S-adenosyl-L-methionine pocket. GTP is bound at residue K155. M189 contacts S-adenosyl-L-methionine. Residues C254 and C257 each contribute to the [4Fe-4S] cluster site. 259 to 261 (RLR) is a binding site for GTP. Residue C271 coordinates [4Fe-4S] cluster.

Belongs to the radical SAM superfamily. MoaA family. As to quaternary structure, monomer and homodimer. It depends on [4Fe-4S] cluster as a cofactor.

The catalysed reaction is GTP + AH2 + S-adenosyl-L-methionine = (8S)-3',8-cyclo-7,8-dihydroguanosine 5'-triphosphate + 5'-deoxyadenosine + L-methionine + A + H(+). It functions in the pathway cofactor biosynthesis; molybdopterin biosynthesis. In terms of biological role, catalyzes the cyclization of GTP to (8S)-3',8-cyclo-7,8-dihydroguanosine 5'-triphosphate. This is GTP 3',8-cyclase from Pelotomaculum thermopropionicum (strain DSM 13744 / JCM 10971 / SI).